The chain runs to 229 residues: 2-C-methyl-D-erythritol 4-phosphate cytidylyltransferase (229 aa).

The protein belongs to the IspD/TarI cytidylyltransferase family. IspD subfamily.

It catalyses the reaction 2-C-methyl-D-erythritol 4-phosphate + CTP + H(+) = 4-CDP-2-C-methyl-D-erythritol + diphosphate. The protein operates within isoprenoid biosynthesis; isopentenyl diphosphate biosynthesis via DXP pathway; isopentenyl diphosphate from 1-deoxy-D-xylulose 5-phosphate: step 2/6. Functionally, catalyzes the formation of 4-diphosphocytidyl-2-C-methyl-D-erythritol from CTP and 2-C-methyl-D-erythritol 4-phosphate (MEP). This Shouchella clausii (strain KSM-K16) (Alkalihalobacillus clausii) protein is 2-C-methyl-D-erythritol 4-phosphate cytidylyltransferase.